The sequence spans 210 residues: Claudin-4 (210 aa).

Over 1-7 (MASMGLQ) the chain is Cytoplasmic. The interaction with EPHA2 stretch occupies residues 1–103 (MASMGLQVMG…GVLLSVVGGK (103 aa)). Residues 8–28 (VMGIALAVLGWLGAILSCALP) traverse the membrane as a helical segment. The Extracellular segment spans residues 29 to 81 (MWRVTAFIGSNIVTSQTIWEGLWMNCVVQSTGQMQCKVYDSLLALPQDLQAAR). Cys-54 and Cys-64 are joined by a disulfide. Residues 82-102 (ALMVVSIILAALGVLLSVVGG) traverse the membrane as a helical segment. Residues 103-117 (KCTNCVEDESAKAKT) are Cytoplasmic-facing. The chain crosses the membrane as a helical span at residues 118–138 (MIVAGVVFLLAGLLVMVPASW). At 139-160 (TANNIIRDFYNPLVVSGQKREM) the chain is on the extracellular side. Residues 161–181 (GASLYVGWAASGLLLLGGALL) form a helical membrane-spanning segment. Topologically, residues 182 to 210 (CCNCPPRADKPYSAKYSAAARSAPASNYV) are cytoplasmic. The residue at position 209 (Tyr-209) is a Phosphotyrosine. Positions 209–210 (YV) are interactions with TJP1, TJP2 and TJP3.

The protein belongs to the claudin family. As to quaternary structure, can form heteropolymeric strands with other claudins. Interacts with CLDN8. Interacts with CLDN1. Directly interacts with TJP1/ZO-1. Interacts with TJP2/ZO-2 and TJP3/ZO-3. Interacts with EPHA2; phosphorylates CLDN4 and may regulate tight junctions. In terms of processing, phosphorylated. Phosphorylation by EPHA2 is stimulated by EFNA1 and alters interaction with TJP1.

Its subcellular location is the cell junction. It localises to the tight junction. It is found in the cell membrane. It carries out the reaction chloride(in) = chloride(out). The catalysed reaction is bromide(in) = bromide(out). It catalyses the reaction iodide(out) = iodide(in). The enzyme catalyses fluoride(in) = fluoride(out). Can associate with other claudins to regulate tight junction structural and functional strand dynamics. May coassemble with CLDN8 into tight junction strands containing anion-selective channels that convey paracellular chloride permeability in renal collecting ducts. May integrate into CLDN3 strands to modulate localized tight junction barrier properties. May disrupt strand assembly of channel-forming CLDN2 and CLDN15 and inhibit cation conductance. Cannot form tight junction strands on its own. This chain is Claudin-4 (CLDN4), found in Canis lupus familiaris (Dog).